A 77-amino-acid polypeptide reads, in one-letter code: Translation initiation factor IF-1, chloroplastic (77 aa).

The 71-residue stretch at 1–71 (MKEQKWIHEG…TRGRIIYRLR (71 aa)) folds into the S1-like domain.

It belongs to the IF-1 family. Component of the 30S ribosomal translation pre-initiation complex which assembles on the 30S ribosome in the order IF-2 and IF-3, IF-1 and N-formylmethionyl-tRNA(fMet); mRNA recruitment can occur at any time during PIC assembly.

Its subcellular location is the plastid. The protein resides in the chloroplast. One of the essential components for the initiation of protein synthesis. Stabilizes the binding of IF-2 and IF-3 on the 30S subunit to which N-formylmethionyl-tRNA(fMet) subsequently binds. Helps modulate mRNA selection, yielding the 30S pre-initiation complex (PIC). Upon addition of the 50S ribosomal subunit IF-1, IF-2 and IF-3 are released leaving the mature 70S translation initiation complex. This Brexia madagascariensis protein is Translation initiation factor IF-1, chloroplastic.